The chain runs to 373 residues: Glutamine synthetase (373 aa).

A2 bears the N-acetylalanine mark. The tract at residues 2 to 25 (ATSASSHLNKGIKQMYMNLPQGEK) is required for glutamine-induced ubiquitination by CRL4(CRBN) and proteasomal degradation. K11 and K14 each carry N6-acetyllysine. In terms of domain architecture, GS beta-grasp spans 24–106 (EKIQLMYIWV…VFCEVFKYNR (83 aa)). A Phosphotyrosine modification is found at Y104. The GS catalytic domain maps to 113–373 (LRHSCKRIMD…TGDEPFQYKN (261 aa)). ATP is bound at residue E134. 4 residues coordinate Mn(2+): E134, E136, E196, and E203. An ATP-binding site is contributed by 203–208 (EFQIGP). 246 to 247 (NW) contributes to the L-glutamate binding site. Residue H253 coordinates Mn(2+). ATP-binding positions include 255 to 257 (NFS), R319, and R324. R319 serves as a coordination point for L-glutamate. Position 336 to 338 (336 to 338 (YFE)) interacts with ADP. Position 338 (E338) interacts with Mn(2+). L-glutamate is bound at residue R340. The residue at position 343 (S343) is a Phosphoserine.

It belongs to the glutamine synthetase family. In terms of assembly, decamer; composed of two pentamers. Interacts with PALMD. Interacts with RHOJ. Interacts with BEST2; this interaction tethers a fraction of GLUL to the membrane, causing a decrease of cytosolic glutamine synthase (GS) activity and inhibits the chloride channel activity of BEST2 by affecting the gating at the aperture in the absence of intracellular glutamate. The cofactor is Mg(2+). Requires Mn(2+) as cofactor. In terms of processing, palmitoylated; undergoes autopalmitoylation. Post-translationally, acetylated by EP300/p300; acetylation is stimulated by increased glutamine levels and promotes ubiquitin-mediated proteasomal degradation. Ubiquitinated by ZNRF1. Ubiquitinated by the DCX (DDB1-CUL4-X-box) E3 ubiquitin-protein ligase complex called CRL4(CRBN), leading to proteasomal degradation. In terms of tissue distribution, in the adult liver, expression is restricted to a small population of hepatocytes which form only a small rim of one to three hepatocytes around the central veins. Expressed in lung microvascular endothelial cells.

It localises to the cytoplasm. The protein localises to the cytosol. The protein resides in the microsome. It is found in the mitochondrion. Its subcellular location is the cell membrane. The enzyme catalyses L-glutamate + NH4(+) + ATP = L-glutamine + ADP + phosphate + H(+). It carries out the reaction L-cysteinyl-[protein] + hexadecanoyl-CoA = S-hexadecanoyl-L-cysteinyl-[protein] + CoA. With respect to regulation, glutamine synthetase activity is inhibited by methionine sulfoximine (MSO). In terms of biological role, glutamine synthetase that catalyzes the ATP-dependent conversion of glutamate and ammonia to glutamine. Its role depends on tissue localization: in the brain, it regulates the levels of toxic ammonia and converts neurotoxic glutamate to harmless glutamine, whereas in the liver, it is one of the enzymes responsible for the removal of ammonia. Plays a key role in ammonium detoxification during erythropoiesis: the glutamine synthetase activity is required to remove ammonium generated by porphobilinogen deaminase (HMBS) during heme biosynthesis to prevent ammonium accumulation and oxidative stress. Essential for proliferation of fetal skin fibroblasts. Independently of its glutamine synthetase activity, required for endothelial cell migration during vascular development. Involved in angiogenesis by regulating membrane localization and activation of the GTPase RHOJ, possibly by promoting RHOJ palmitoylation. May act as a palmitoyltransferase for RHOJ: able to autopalmitoylate and then transfer the palmitoyl group to RHOJ. Plays a role in ribosomal 40S subunit biogenesis. Through the interaction with BEST2, inhibits BEST2 channel activity by affecting the gating at the aperture in the absence of intracellular L-glutamate, but sensitizes BEST2 to intracellular L-glutamate, which promotes the opening of BEST2 and thus relieves its inhibitory effect on BEST2. This chain is Glutamine synthetase, found in Rattus norvegicus (Rat).